The following is a 362-amino-acid chain: Homeobox protein Nkx-2.3 (362 aa).

Disordered stretches follow at residues 126–149 (EAAG…RKPR) and 203–222 (QRQD…PPRR). The segment covering 132–141 (KTSEDGERPK) has biased composition (basic and acidic residues). Residues 145-204 (RRKPRVLFSQAQVFELERRFKQQRYLSAPEREHLASSLKLTSTQVKIWFQNRRYKCKRQR) constitute a DNA-binding region (homeobox).

The protein belongs to the NK-2 homeobox family. In terms of tissue distribution, expressed in spleen and intestine. Also expressed in salivary gland and tongue.

The protein resides in the nucleus. Its function is as follows. Transcriptional regulator essential for normal development and functions of the small intestine and spleen. Activates directly MADCAM1 expression. Required for homing of lymphocytes in spleen and mucosa-associated lymphoid tissue. May have a role during pharyngeal organogenesis. The protein is Homeobox protein Nkx-2.3 (Nkx2-3) of Mus musculus (Mouse).